Reading from the N-terminus, the 379-residue chain is Galactose-1-phosphate uridylyltransferase (379 aa).

The span at 1–15 (MSQSGADPEQRQQAS) shows a compositional bias: polar residues. A disordered region spans residues 1-20 (MSQSGADPEQRQQASEADAM). Cys-75 is a binding site for Zn(2+). Residues Ala-81, 97 to 98 (ND), and Asn-173 contribute to the UDP-alpha-D-glucose site. His-184 contributes to the Zn(2+) binding site. The Tele-UMP-histidine intermediate role is filled by His-186. Gln-188 provides a ligand contact to UDP-alpha-D-glucose. Glu-202, His-301, His-319, and His-321 together coordinate Zn(2+). Residues 334–337 (KFMV) and 339–340 (YE) contribute to the UDP-alpha-D-glucose site.

The protein belongs to the galactose-1-phosphate uridylyltransferase type 1 family. Homodimer. It depends on Zn(2+) as a cofactor.

It carries out the reaction alpha-D-galactose 1-phosphate + UDP-alpha-D-glucose = alpha-D-glucose 1-phosphate + UDP-alpha-D-galactose. The protein operates within carbohydrate metabolism; galactose metabolism. In terms of biological role, plays an important role in galactose metabolism. This is Galactose-1-phosphate uridylyltransferase (Galt) from Rattus norvegicus (Rat).